The sequence spans 490 residues: ATP synthase subunit beta, chloroplastic (490 aa).

ATP is bound at residue 170-177; sequence GGAGVGKT.

This sequence belongs to the ATPase alpha/beta chains family. As to quaternary structure, F-type ATPases have 2 components, CF(1) - the catalytic core - and CF(0) - the membrane proton channel. CF(1) has five subunits: alpha(3), beta(3), gamma(1), delta(1), epsilon(1). CF(0) has four main subunits: a(1), b(1), b'(1) and c(9-12).

It localises to the plastid. Its subcellular location is the chloroplast thylakoid membrane. The enzyme catalyses ATP + H2O + 4 H(+)(in) = ADP + phosphate + 5 H(+)(out). Functionally, produces ATP from ADP in the presence of a proton gradient across the membrane. The catalytic sites are hosted primarily by the beta subunits. In Ipomoea quamoclit (Cypress vine), this protein is ATP synthase subunit beta, chloroplastic.